The chain runs to 1351 residues: Serine-rich adhesin for platelets (1351 aa).

Positions 1 to 89 (MSKRQKEFHD…VNMLHDQQAF (89 aa)) are cleaved as a signal peptide. Positions 90–230 (AASDAPLTSE…KTSTTSTSTA (141 aa)) are serine-rich repeat region 1, SRR1. Residues 100–111 (LNTQSETVGNQN) are compositionally biased toward polar residues. 2 disordered regions span residues 100 to 228 (LNTQ…TSTS) and 751 to 1323 (NSMS…GLLG). Composition is skewed to low complexity over residues 112–133 (STTIEASTSTTDSTSVTKNSSS) and 149–228 (NVTS…TSTS). Residues 231-751 (PIKLRTFSRL…TTFKYEVTRN (521 aa)) form a non-repeat region (NRR) region. The span at 752-1294 (SMSDSVSTSG…SQSTLSATSE (543 aa)) shows a compositional bias: low complexity. The interval 752 to 1312 (SMSDSVSTSG…AQSEKRLPDT (561 aa)) is serine-rich repeat region 1, SRR1. The short motif at 1309–1313 (LPDTG) is the LPXTG sorting signal element. At Thr1312 the chain carries Pentaglycyl murein peptidoglycan amidated threonine. Residues 1313–1351 (GDSIKQNGLLGGVMTLLVGLGLMKRKKKKDENDQDDSQA) constitute a propeptide, removed by sortase.

The protein belongs to the serine-rich repeat protein (SRRP) family. Proteolytically cleaved by a metalloprotease. Post-translationally, glycosylated. It is probable that most of the Ser residues in SSR1 and SSR2 are O-GlcNAcylated. Sequential glycosylation by sugar transferases are able to generate complex sugar polymorphisms.

It is found in the secreted. Its subcellular location is the cell wall. Mediates binding to human platelets, possibly through a receptor-ligand interaction. Probably associated with virulence in endovascular infection. The protein is Serine-rich adhesin for platelets (sasA) of Staphylococcus aureus (strain MRSA252).